The primary structure comprises 312 residues: Olfactory receptor 6C2 (312 aa).

The Extracellular portion of the chain corresponds to 1–23; the sequence is MKNHTVIRTFILLGLTGDPHLQV. The N-linked (GlcNAc...) asparagine glycan is linked to N3. A helical transmembrane segment spans residues 24–44; it reads LLFIFLFLTYMLSVTGNLTII. Topologically, residues 45-52 are cytoplasmic; the sequence is TLTLVDHH. Residues 53 to 73 form a helical membrane-spanning segment; the sequence is LKTPMYFFLRNFSFLEVSFTT. Topologically, residues 74 to 97 are extracellular; sequence VCIPRFLYNISMGDNTITYNACAS. A glycan (N-linked (GlcNAc...) asparagine) is linked at N82. The cysteines at positions 95 and 187 are disulfide-linked. A helical transmembrane segment spans residues 98–118; sequence QIFFVILFGATEFFLLAAMSY. Residues 119–137 lie on the Cytoplasmic side of the membrane; sequence DRYVAICKPLHYVVIMNNR. A helical membrane pass occupies residues 138 to 158; it reads VCTLLVLCCWVAGLMIIVPPL. Topologically, residues 159 to 195 are extracellular; that stretch reads SLGLQLEFCDSNAIDHFSCDAGPLLKISCSDTWVIEQ. Residues 196–215 form a helical membrane-spanning segment; the sequence is MVILMAVFALIITLVCVILS. The Cytoplasmic segment spans residues 216–235; sequence YLYIVRTILKFPSVQQRKKA. The helical transmembrane segment at 236–256 threads the bilayer; it reads FSTCSSHMIVVSIAYGSCIFI. Residues 257–269 lie on the Extracellular side of the membrane; it reads YIKPSAKDEVAIN. The helical transmembrane segment at 270-290 threads the bilayer; that stretch reads KGVSVLTTSVAPLLNPFIYTL. Over 291-312 the chain is Cytoplasmic; sequence RNKQVKQAFSDSIKRIAFLSKK.

This sequence belongs to the G-protein coupled receptor 1 family.

The protein localises to the cell membrane. Functionally, odorant receptor. The protein is Olfactory receptor 6C2 (OR6C2) of Homo sapiens (Human).